Reading from the N-terminus, the 161-residue chain is Nucleotide-binding protein RSc2549 (161 aa).

The protein belongs to the YajQ family.

Nucleotide-binding protein. The chain is Nucleotide-binding protein RSc2549 from Ralstonia nicotianae (strain ATCC BAA-1114 / GMI1000) (Ralstonia solanacearum).